The chain runs to 110 residues: Coiled-coil-helix-coiled-coil-helix domain-containing protein 5 (110 aa).

N-acetylmethionine is present on Met1. 2 consecutive CHCH domains span residues 9-52 (ARYC…PIIR) and 55-97 (RQAC…QPPR). 4 consecutive short sequence motifs (cx9C motif) follow at residues 12-22 (CGRELEQYGQC), 34-44 (CHYLKMSIAQC), 58-68 (CAQPFEAFEEC), and 79-89 (CAEHMRRFLQC). 4 disulfide bridges follow: Cys12-Cys44, Cys22-Cys34, Cys58-Cys89, and Cys68-Cys79.

As to quaternary structure, monomer.

It is found in the mitochondrion intermembrane space. The sequence is that of Coiled-coil-helix-coiled-coil-helix domain-containing protein 5 (CHCHD5) from Homo sapiens (Human).